Consider the following 516-residue polypeptide: L-amino-acid oxidase (516 aa).

The signal sequence occupies residues 1 to 18; that stretch reads MNVFFMFSLLFLAALGSC. A disulfide bond links cysteine 28 and cysteine 189. Residues 61 to 62, 81 to 82, arginine 89, and 103 to 106 each bind FAD; these read MS, EA, and GPMR. Positions 106 and 239 each coordinate substrate. Valine 279 contacts FAD. Cysteines 349 and 430 form a disulfide. An N-linked (GlcNAc...) asparagine glycan is attached at asparagine 379. Tyrosine 390 contacts substrate. Residues glutamate 475 and 482–487 each bind FAD; that span reads GWIDST. Substrate is bound at residue 482–483; the sequence is GW.

Belongs to the flavin monoamine oxidase family. FIG1 subfamily. In terms of assembly, homodimer; non-covalently linked. FAD is required as a cofactor. In terms of processing, N-glycosylated. In terms of tissue distribution, expressed by the venom gland.

Its subcellular location is the secreted. The enzyme catalyses an L-alpha-amino acid + O2 + H2O = a 2-oxocarboxylate + H2O2 + NH4(+). Catalyzes an oxidative deamination of predominantly hydrophobic and aromatic L-amino acids, thus producing hydrogen peroxide that may contribute to the diverse toxic effects of this enzyme. Exhibits diverse biological activities, such as hemorrhage, hemolysis, edema, apoptosis of vascular endothelial cells or tumor cell lines, antibacterial and antiparasitic activities, as well as regulation of platelet aggregation. Effects of snake L-amino oxidases on platelets are controversial, since they either induce aggregation or inhibit agonist-induced aggregation. These different effects are probably due to different experimental conditions. In Sistrurus catenatus edwardsii (Desert massasauga), this protein is L-amino-acid oxidase.